The sequence spans 173 residues: GTP-dependent dephospho-CoA kinase (173 aa).

Aspartate 52, valine 53, valine 54, aspartate 71, lysine 73, and aspartate 122 together coordinate GTP.

It belongs to the GTP-dependent DPCK family.

The catalysed reaction is 3'-dephospho-CoA + GTP = GDP + CoA + H(+). It participates in cofactor biosynthesis; coenzyme A biosynthesis. Catalyzes the GTP-dependent phosphorylation of the 3'-hydroxyl group of dephosphocoenzyme A to form coenzyme A (CoA). The sequence is that of GTP-dependent dephospho-CoA kinase from Metallosphaera sedula (strain ATCC 51363 / DSM 5348 / JCM 9185 / NBRC 15509 / TH2).